The chain runs to 274 residues: Phosphoribosylaminoimidazole-succinocarboxamide synthase (274 aa).

The protein belongs to the SAICAR synthetase family.

It catalyses the reaction 5-amino-1-(5-phospho-D-ribosyl)imidazole-4-carboxylate + L-aspartate + ATP = (2S)-2-[5-amino-1-(5-phospho-beta-D-ribosyl)imidazole-4-carboxamido]succinate + ADP + phosphate + 2 H(+). The protein operates within purine metabolism; IMP biosynthesis via de novo pathway; 5-amino-1-(5-phospho-D-ribosyl)imidazole-4-carboxamide from 5-amino-1-(5-phospho-D-ribosyl)imidazole-4-carboxylate: step 1/2. This Nitrosopumilus maritimus (strain SCM1) protein is Phosphoribosylaminoimidazole-succinocarboxamide synthase.